We begin with the raw amino-acid sequence, 636 residues long: Chaperone protein HtpG (636 aa).

Positions 1–342 (MSGETLEFQA…AHDLSLNISR (342 aa)) are a; substrate-binding. Residues 343–558 (ELLQQDRQIQ…AHDVTPTLEK (216 aa)) form a b region. The tract at residues 559 to 636 (MYRAMGHEVP…ILAERLARTL (78 aa)) is c.

This sequence belongs to the heat shock protein 90 family. In terms of assembly, homodimer.

Its subcellular location is the cytoplasm. In terms of biological role, molecular chaperone. Has ATPase activity. The sequence is that of Chaperone protein HtpG from Salinispora arenicola (strain CNS-205).